Consider the following 1533-residue polypeptide: Glycogen debranching enzyme (1533 aa).

Serine 64 carries the phosphoserine modification. Catalysis depends on residues aspartate 527, histidine 530, and aspartate 628.

The protein belongs to the glycogen debranching enzyme family. In terms of assembly, monomer. Interacts with NHLRC1/malin. Post-translationally, ubiquitinated. As to expression, ubiquitous. Expressed in striated skeletal muscle, heart, liver, spleen, skin, spinal cord, lung, kidney and testicle.

It is found in the cytoplasm. The enzyme catalyses Transfers a segment of a (1-&gt;4)-alpha-D-glucan to a new position in an acceptor, which may be glucose or a (1-&gt;4)-alpha-D-glucan.. It catalyses the reaction Hydrolysis of (1-&gt;6)-alpha-D-glucosidic branch linkages in glycogen phosphorylase limit dextrin.. In terms of biological role, multifunctional enzyme acting as 1,4-alpha-D-glucan:1,4-alpha-D-glucan 4-alpha-D-glycosyltransferase and amylo-1,6-glucosidase in glycogen degradation. This chain is Glycogen debranching enzyme, found in Equus caballus (Horse).